The primary structure comprises 695 residues: UvrABC system protein C (695 aa).

Residues 1–10 (MNHDPAETRD) are compositionally biased toward basic and acidic residues. The tract at residues 1–44 (MNHDPAETRDTAAAPLADTESPSPVSPELTPHPAPAAQDIDTAT) is disordered. The GIY-YIG domain maps to 88–166 (TSPGVYRMLN…IKQLRPRFNV (79 aa)). Residues 276-311 (RAVKQELAVEMEKASNELEFETAALYRDRLAALSAI) enclose the UVR domain.

The protein belongs to the UvrC family. In terms of assembly, interacts with UvrB in an incision complex.

It is found in the cytoplasm. In terms of biological role, the UvrABC repair system catalyzes the recognition and processing of DNA lesions. UvrC both incises the 5' and 3' sides of the lesion. The N-terminal half is responsible for the 3' incision and the C-terminal half is responsible for the 5' incision. This is UvrABC system protein C from Rhodopseudomonas palustris (strain HaA2).